The following is a 218-amino-acid chain: Transmembrane gamma-carboxyglutamic acid protein 1 (218 aa).

Positions 1 to 20 are excised as a propeptide; the sequence is MGRIFLTGEKANSVLKRYPR. The 47-residue stretch at 20–66 folds into the Gla domain; it reads RANGLFEEIRQGNIERECKEEVCTFEEAREAFENNEKTKEFWNTYTK. The Extracellular portion of the chain corresponds to 21–80; that stretch reads ANGLFEEIRQGNIERECKEEVCTFEEAREAFENNEKTKEFWNTYTKAQQGESNRGSDWFQ. A disulfide bridge links Cys-37 with Cys-42. A helical membrane pass occupies residues 81 to 101; it reads FYLTFPLIFGLFIILLVIFLI. Residues 102–218 are Cytoplasmic-facing; sequence WRCFLRNKTR…AMVPVATTIK (117 aa). The disordered stretch occupies residues 160 to 192; that stretch reads STRLSNCDPPPTYEEATGQMNLRRSETEPHLDP. A compositionally biased stretch (basic and acidic residues) spans 182–192; sequence RRSETEPHLDP.

Gla residues are produced after subsequent post-translational modifications of glutamate by a vitamin K-dependent gamma-carboxylase.

The protein localises to the membrane. This Bos taurus (Bovine) protein is Transmembrane gamma-carboxyglutamic acid protein 1 (PRRG1).